The sequence spans 353 residues: UPF0283 membrane protein YcjF (353 aa).

The span at M1 to P19 shows a compositional bias: basic and acidic residues. A disordered region spans residues M1 to R35. Helical transmembrane passes span M70 to T90, V100 to V120, and E213 to W233.

Belongs to the UPF0283 family.

Its subcellular location is the cell inner membrane. This Salmonella dublin (strain CT_02021853) protein is UPF0283 membrane protein YcjF.